A 354-amino-acid polypeptide reads, in one-letter code: Fe(3+) ions import ATP-binding protein FbpC (354 aa).

One can recognise an ABC transporter domain in the interval 4-236; the sequence is LELHAVHKSF…PRDAQTALFL (233 aa). An ATP-binding site is contributed by 36-43; the sequence is GPSGSGKT.

This sequence belongs to the ABC transporter superfamily. Fe(3+) ion importer (TC 3.A.1.10) family. The complex is composed of two ATP-binding proteins (FbpC), two transmembrane proteins (FbpB) and a solute-binding protein (FbpA).

Its subcellular location is the cell inner membrane. It carries out the reaction Fe(3+)(out) + ATP + H2O = Fe(3+)(in) + ADP + phosphate + H(+). Its function is as follows. Part of the ABC transporter complex FbpABC involved in Fe(3+) ions import. Responsible for energy coupling to the transport system. This chain is Fe(3+) ions import ATP-binding protein FbpC, found in Pseudomonas fluorescens (strain ATCC BAA-477 / NRRL B-23932 / Pf-5).